Consider the following 629-residue polypeptide: Chaperone protein HtpG (629 aa).

The tract at residues Met-1 to Arg-335 is a; substrate-binding. The tract at residues Glu-336 to Lys-547 is b. The segment at Met-548 to Ser-629 is c.

The protein belongs to the heat shock protein 90 family. In terms of assembly, homodimer.

Its subcellular location is the cytoplasm. Its function is as follows. Molecular chaperone. Has ATPase activity. The protein is Chaperone protein HtpG of Chlorobaculum tepidum (strain ATCC 49652 / DSM 12025 / NBRC 103806 / TLS) (Chlorobium tepidum).